Here is a 598-residue protein sequence, read N- to C-terminus: Serine/threonine-protein kinase PLK1 (598 aa).

The tract at residues 1 to 26 (MAQVAGKKLTVAPEAGKPPGIPGSSS) is disordered. S25 and S26 each carry phosphoserine. Residues 44 to 296 (YLRGRFLGKG…IDDLLNDEFF (253 aa)) enclose the Protein kinase domain. ATP is bound by residues 50-58 (LGKGGFAKC), K73, and E122. The active-site Proton acceptor is the D167. ATP contacts are provided by residues 169 to 172 (KLGN) and D185. The tract at residues 185-212 (DFGLATKVEYDGERKKTLCGTPNYIAPE) is activation loop. Residue T201 is modified to Phosphothreonine. Phosphoserine; by autocatalysis is present on residues S260 and S326. Positions 328–331 (RKPL) match the D-box that targets the protein for proteasomal degradation in anaphase motif. The interval 336–360 (KGQDSPLVEKQSVPAKEEEMQQPES) is disordered. S340 is modified (phosphoserine). Residues 404–482 (WVSKWVDYSD…LKYFRNYMSE (79 aa)) form the POLO box 1 domain. The linker stretch occupies residues 487–501 (AGANITPREGDELAR). The POLO box 2 domain maps to 504–586 (FLRTWFRTRS…ARTMVEKLQS (83 aa)). Residues 532–534 (HTK) form an important for interaction with phosphorylated proteins region.

It belongs to the protein kinase superfamily. Ser/Thr protein kinase family. As to quaternary structure, interacts with plk1 and kif2a. Interacts with fbxo5. In terms of processing, activated by phosphorylation on Thr-201 during M phase. Protein levels are down-regulated by proteasomal degradation in anaphase.

The protein resides in the nucleus. It localises to the cytoplasm. The protein localises to the cytoskeleton. It is found in the microtubule organizing center. Its subcellular location is the centrosome. The protein resides in the spindle. It localises to the midbody. It catalyses the reaction L-seryl-[protein] + ATP = O-phospho-L-seryl-[protein] + ADP + H(+). It carries out the reaction L-threonyl-[protein] + ATP = O-phospho-L-threonyl-[protein] + ADP + H(+). Its function is as follows. Plays multiple essential roles during mitosis. Phosphorylates the N-terminal domain of cdc25, which leads to cyclin b-cdc2 activation and mitotic entry. Also required for organization of bipolar spindles, and for exit from mitosis. Phosphorylates tpx2. In Xenopus tropicalis (Western clawed frog), this protein is Serine/threonine-protein kinase PLK1 (plk1).